We begin with the raw amino-acid sequence, 392 residues long: Tryptophan synthase beta chain (392 aa).

Residue K84 is modified to N6-(pyridoxal phosphate)lysine.

Belongs to the TrpB family. Tetramer of two alpha and two beta chains. Requires pyridoxal 5'-phosphate as cofactor.

The catalysed reaction is (1S,2R)-1-C-(indol-3-yl)glycerol 3-phosphate + L-serine = D-glyceraldehyde 3-phosphate + L-tryptophan + H2O. Its pathway is amino-acid biosynthesis; L-tryptophan biosynthesis; L-tryptophan from chorismate: step 5/5. In terms of biological role, the beta subunit is responsible for the synthesis of L-tryptophan from indole and L-serine. The polypeptide is Tryptophan synthase beta chain (trpB) (Chlamydia trachomatis serovar D (strain ATCC VR-885 / DSM 19411 / UW-3/Cx)).